Here is a 443-residue protein sequence, read N- to C-terminus: ATP-dependent protease ATPase subunit HslU (443 aa).

ATP is bound by residues Ile-19, 61-66 (GVGKTE), Asp-256, Glu-321, and Arg-393.

It belongs to the ClpX chaperone family. HslU subfamily. A double ring-shaped homohexamer of HslV is capped on each side by a ring-shaped HslU homohexamer. The assembly of the HslU/HslV complex is dependent on binding of ATP.

The protein localises to the cytoplasm. Its function is as follows. ATPase subunit of a proteasome-like degradation complex; this subunit has chaperone activity. The binding of ATP and its subsequent hydrolysis by HslU are essential for unfolding of protein substrates subsequently hydrolyzed by HslV. HslU recognizes the N-terminal part of its protein substrates and unfolds these before they are guided to HslV for hydrolysis. The chain is ATP-dependent protease ATPase subunit HslU from Ralstonia nicotianae (strain ATCC BAA-1114 / GMI1000) (Ralstonia solanacearum).